Here is a 354-residue protein sequence, read N- to C-terminus: GDSL esterase/lipase At3g09930 (354 aa).

Positions 1–24 (MELPKLLISLFLFSFSSFFLGAES) are cleaved as a signal peptide. Ser46 serves as the catalytic Nucleophile. 5 N-linked (GlcNAc...) asparagine glycosylation sites follow: Asn133, Asn233, Asn237, Asn256, and Asn300. Residues Asp329 and His332 contribute to the active site.

This sequence belongs to the 'GDSL' lipolytic enzyme family.

The protein resides in the secreted. This is GDSL esterase/lipase At3g09930 from Arabidopsis thaliana (Mouse-ear cress).